A 502-amino-acid polypeptide reads, in one-letter code: MAQRCVCVLALVAMLLLVFPTVSRSMGPRSGEHQRASRIPSQFSKEERVAMKEALKGAIQIPTVTFSSEKSNTTALAEFGKYIHKVFPTVVSTSFIQHEVVEEYSHLFTIQGSDPSLQPYLLMAHFDVVPAPEEGWEVPPFSGLERDGIIYGRGTLDDKNSVMALLQALELLLIRKYIPRRSFFISLGHDEESSGTGAQRISALLQSRGVQLAFIVDEGGFILDDFIPNFKKPIALIAVSEKGSMNLMLQVNMTSGHSSAPPKETSIGILAAAVSRLEQTPMPIIFGSGTVVTVLQQLANEFPFPVNIILSNPWLFEPLISRFMERNPLTNAIIRTTTALTIFKAGVKFNVIPPVAQATVNFRIHPGQTVQEVLELTKNIVADNRVQFHVLSAFDPLPVSPSDDKALGYQLLRQTVQSVFPEVNITAPVTSIGNTDSRFFTNLTTGIYRFYPIYIQPEDFKRIHGVNEKISVQAYETQVKFIFELIQNADTDQEPVSHLHKL.

The first 25 residues, 1-25 (MAQRCVCVLALVAMLLLVFPTVSRS), serve as a signal peptide directing secretion. His125 contributes to the Zn(2+) binding site. Asp127 is a catalytic residue. Asp157 contributes to the Zn(2+) binding site. The active-site Proton acceptor is Glu191. Zn(2+) is bound by residues Glu192 and Asp217. A glycan (N-linked (GlcNAc...) asparagine) is linked at Asn252. His464 is a Zn(2+) binding site.

It belongs to the peptidase M20A family. Zn(2+) serves as cofactor.

The protein localises to the secreted. The catalysed reaction is an N-acyl-L-amino acid + H2O = an L-alpha-amino acid + a carboxylate. It catalyses the reaction an N-acyl-aromatic L-alpha-amino acid + H2O = an aromatic L-alpha-amino acid + a carboxylate. It carries out the reaction L-phenylalanine + (9Z)-octadecenoate = N-(9Z-octadecenoyl)-L-phenylalanine + H2O. The enzyme catalyses N-(9Z-octadecenoyl)-L-leucine + H2O = L-leucine + (9Z)-octadecenoate. The catalysed reaction is N-(5Z,8Z,11Z,14Z)-eicosatetraenoyl-glycine + H2O = (5Z,8Z,11Z,14Z)-eicosatetraenoate + glycine. It catalyses the reaction N-hexadecanoyl-L-phenylalanine + H2O = hexadecanoate + L-phenylalanine. It carries out the reaction N-octadecanoyl-L-phenylalanine + H2O = octadecanoate + L-phenylalanine. The enzyme catalyses N-(4Z,7Z,10Z,13Z,16Z,19Z-docosahexaenoyl)-L-phenylalanine + H2O = (4Z,7Z,10Z,13Z,16Z,19Z)-docosahexaenoate + L-phenylalanine. The catalysed reaction is N-(9Z-octadecenoyl)-L-asparagine + H2O = L-asparagine + (9Z)-octadecenoate. It catalyses the reaction (9Z)-octadecenoate + glycine = N-(9Z-octadecenoyl)glycine + H2O. It carries out the reaction N-(9Z-octadecenoyl)-L-lysine + H2O = L-lysine + (9Z)-octadecenoate. The enzyme catalyses N-(9Z-octadecenoyl)-L-methionine + H2O = (9Z)-octadecenoate + L-methionine. The catalysed reaction is N-(9Z-octadecenoyl)-L-serine + H2O = L-serine + (9Z)-octadecenoate. It catalyses the reaction N-(9Z-octadecenoyl)-L-tryptophan + H2O = L-tryptophan + (9Z)-octadecenoate. It carries out the reaction N-(9Z-octadecenoyl)-L-tyrosine + H2O = L-tyrosine + (9Z)-octadecenoate. The enzyme catalyses N-(9Z-octadecenoyl)-L-glutamine + H2O = L-glutamine + (9Z)-octadecenoate. The catalysed reaction is N-(5Z,8Z,11Z,14Z-eicosatetraenoyl)-L-serine + H2O = (5Z,8Z,11Z,14Z)-eicosatetraenoate + L-serine. It catalyses the reaction (5Z,8Z,11Z,14Z)-eicosatetraenoate + L-phenylalanine = N-(5Z,8Z,11Z,14Z-eicosatetraenoyl)-L-phenylalanine + H2O. It participates in amino-acid metabolism. Its pathway is energy metabolism. The protein operates within lipid metabolism; fatty acid metabolism. With respect to regulation, lipoproteins are powerful coactivators of PM20D1 activity in vitro and NAA biosynthesis in vivo. Functionally, secreted enzyme that regulates the endogenous N-fatty acyl amino acid (NAAs) tissue and circulating levels by functioning as a bidirectional NAA synthase/hydrolase. It condenses free fatty acids and free amino acids to generate NAAs and bidirectionally catalyzes the reverse hydrolysis reaction. Some of these NAAs stimulate oxidative metabolism via mitochondrial uncoupling, increasing energy expenditure in a UPC1-independent manner. Thereby, this secreted protein may indirectly regulate whole body energy expenditure. PM20D1 circulates in tight association with both low- and high-density (LDL and HDL,respectively) lipoprotein particles. This chain is N-fatty-acyl-amino acid synthase/hydrolase PM20D1, found in Homo sapiens (Human).